A 642-amino-acid polypeptide reads, in one-letter code: 4-hydroxy-3-methylbut-2-enyl diphosphate reductase (642 aa).

Residues 1 to 282 form a 4-hydroxy-3-methylbut-2-enyl diphosphate reductase region; the sequence is MRKVMLAEKA…EEAISKMSEN (282 aa). Cysteine 13 is a binding site for [4Fe-4S] cluster. Residues histidine 42 and histidine 77 each coordinate (2E)-4-hydroxy-3-methylbut-2-enyl diphosphate. Histidine 42 and histidine 77 together coordinate dimethylallyl diphosphate. Positions 42 and 77 each coordinate isopentenyl diphosphate. [4Fe-4S] cluster is bound at residue cysteine 99. Residue histidine 127 participates in (2E)-4-hydroxy-3-methylbut-2-enyl diphosphate binding. Histidine 127 serves as a coordination point for dimethylallyl diphosphate. Histidine 127 contacts isopentenyl diphosphate. Glutamate 129 serves as the catalytic Proton donor. Threonine 165 is a binding site for (2E)-4-hydroxy-3-methylbut-2-enyl diphosphate. Cysteine 193 lines the [4Fe-4S] cluster pocket. Residues serine 221, serine 222, asparagine 223, and serine 266 each coordinate (2E)-4-hydroxy-3-methylbut-2-enyl diphosphate. Dimethylallyl diphosphate contacts are provided by serine 221, serine 222, asparagine 223, and serine 266. Positions 221, 222, 223, and 266 each coordinate isopentenyl diphosphate. 3 S1 motif domains span residues 309 to 377, 484 to 552, and 569 to 638; these read GASV…LSVK, GQVV…LSVK, and GSVV…LSIR.

It in the N-terminal section; belongs to the IspH family. [4Fe-4S] cluster serves as cofactor.

The catalysed reaction is isopentenyl diphosphate + 2 oxidized [2Fe-2S]-[ferredoxin] + H2O = (2E)-4-hydroxy-3-methylbut-2-enyl diphosphate + 2 reduced [2Fe-2S]-[ferredoxin] + 2 H(+). The enzyme catalyses dimethylallyl diphosphate + 2 oxidized [2Fe-2S]-[ferredoxin] + H2O = (2E)-4-hydroxy-3-methylbut-2-enyl diphosphate + 2 reduced [2Fe-2S]-[ferredoxin] + 2 H(+). It participates in isoprenoid biosynthesis; dimethylallyl diphosphate biosynthesis; dimethylallyl diphosphate from (2E)-4-hydroxy-3-methylbutenyl diphosphate: step 1/1. Its pathway is isoprenoid biosynthesis; isopentenyl diphosphate biosynthesis via DXP pathway; isopentenyl diphosphate from 1-deoxy-D-xylulose 5-phosphate: step 6/6. In terms of biological role, catalyzes the conversion of 1-hydroxy-2-methyl-2-(E)-butenyl 4-diphosphate (HMBPP) into a mixture of isopentenyl diphosphate (IPP) and dimethylallyl diphosphate (DMAPP). Acts in the terminal step of the DOXP/MEP pathway for isoprenoid precursor biosynthesis. The polypeptide is 4-hydroxy-3-methylbut-2-enyl diphosphate reductase (Clostridium acetobutylicum (strain ATCC 824 / DSM 792 / JCM 1419 / IAM 19013 / LMG 5710 / NBRC 13948 / NRRL B-527 / VKM B-1787 / 2291 / W)).